The sequence spans 1015 residues: PHD finger protein 20-like protein 1 (1015 aa).

The Tudor 1 domain maps to 11 to 71; the sequence is ITFEIGARLE…SNRLRPLERP (61 aa). Residues lysine 75 and lysine 79 each participate in a glycyl lysine isopeptide (Lys-Gly) (interchain with G-Cter in SUMO2) cross-link. The Tudor 2 domain occupies 85–141; it reads FDFKAGEEVLARWTDCRYYPAKIEAINKEGTFTVQFYDGVIRCLKRMHIKAMPEDAK. Disordered regions lie at residues 183–206 and 309–367; these read AKNK…RDGG and EQAI…KAPK. Polar residues-rich tracts occupy residues 186-197 and 315-346; these read KTGSKPRTSANS and KPQS…SSGK. Residue serine 368 is modified to Phosphoserine. Disordered stretches follow at residues 389 to 455 and 478 to 513; these read VINK…SSVP and CGSE…NPTS. Positions 404–415 are enriched in basic residues; the sequence is PCKHSERRRRSQ. Serine 432 is subject to Phosphoserine. Composition is skewed to polar residues over residues 443–453 and 480–489; these read SISSQNQQESS and SEVTGSQAPD. Lysine 530 is covalently cross-linked (Glycyl lysine isopeptide (Lys-Gly) (interchain with G-Cter in SUMO2)). Over residues 539–565 the composition is skewed to basic and acidic residues; the sequence is EKTSTAFGKRKEKDKERKEKRDKDHYK. The interval 539–585 is disordered; that stretch reads EKTSTAFGKRKEKDKERKEKRDKDHYKPKQKKKKKKKKKSKQHDYSD. The span at 566 to 579 shows a compositional bias: basic residues; it reads PKQKKKKKKKKKSK. The PHD-type zinc-finger motif lies at 681–729; the sequence is IVRCICELDEENGFMIQCEECLCWQHSVCMGLLEDSIPEQYICYICRDP. Residue lysine 849 forms a Glycyl lysine isopeptide (Lys-Gly) (interchain with G-Cter in SUMO2) linkage. Polar residues predominate over residues 859-878; the sequence is HSYQKPQSFSQDCHSLTDPG. The tract at residues 859–889 is disordered; sequence HSYQKPQSFSQDCHSLTDPGSSDDDDVSSFE. Positions 879–889 are enriched in acidic residues; the sequence is SSDDDDVSSFE. Lysine 907 bears the N6-acetyllysine mark.

As to quaternary structure, interacts with methylated DNMT1 (DNMT1K142me1). Interacts with SOX2.

The protein localises to the nucleus. Its function is as follows. Is a negative regulator of proteasomal degradation of a set of methylated proteins, including DNMT1 and SOX2. Involved in the maintainance of embryonic stem cells pluripotency, through the regulation of SOX2 levels. This Rattus norvegicus (Rat) protein is PHD finger protein 20-like protein 1 (Phf20l1).